Reading from the N-terminus, the 198-residue chain is Protein GrpE (198 aa).

A disordered region spans residues 1 to 56 (MVEKKKSQAEKNNQSATEEEIEKAVKGSKRDSNAADEKNSASAAASSSAVSDAEPA). Basic and acidic residues predominate over residues 22-39 (EKAVKGSKRDSNAADEKN). Positions 40–56 (SASAAASSSAVSDAEPA) are enriched in low complexity.

It belongs to the GrpE family. In terms of assembly, homodimer.

It localises to the cytoplasm. In terms of biological role, participates actively in the response to hyperosmotic and heat shock by preventing the aggregation of stress-denatured proteins, in association with DnaK and GrpE. It is the nucleotide exchange factor for DnaK and may function as a thermosensor. Unfolded proteins bind initially to DnaJ; upon interaction with the DnaJ-bound protein, DnaK hydrolyzes its bound ATP, resulting in the formation of a stable complex. GrpE releases ADP from DnaK; ATP binding to DnaK triggers the release of the substrate protein, thus completing the reaction cycle. Several rounds of ATP-dependent interactions between DnaJ, DnaK and GrpE are required for fully efficient folding. In Oenococcus oeni (strain ATCC BAA-331 / PSU-1), this protein is Protein GrpE.